We begin with the raw amino-acid sequence, 223 residues long: Sugar fermentation stimulation protein homolog (223 aa).

The protein belongs to the SfsA family.

The protein is Sugar fermentation stimulation protein homolog of Thermosipho melanesiensis (strain DSM 12029 / CIP 104789 / BI429).